Consider the following 446-residue polypeptide: Na(+)-translocating NADH-quinone reductase subunit A (446 aa).

The protein belongs to the NqrA family. In terms of assembly, composed of six subunits; NqrA, NqrB, NqrC, NqrD, NqrE and NqrF.

It carries out the reaction a ubiquinone + n Na(+)(in) + NADH + H(+) = a ubiquinol + n Na(+)(out) + NAD(+). Its function is as follows. NQR complex catalyzes the reduction of ubiquinone-1 to ubiquinol by two successive reactions, coupled with the transport of Na(+) ions from the cytoplasm to the periplasm. NqrA to NqrE are probably involved in the second step, the conversion of ubisemiquinone to ubiquinol. The chain is Na(+)-translocating NADH-quinone reductase subunit A from Histophilus somni (strain 2336) (Haemophilus somnus).